The following is a 266-amino-acid chain: Ribosomal RNA small subunit methyltransferase J (266 aa).

Residues 109–110, 125–126, and Asp185 contribute to the S-adenosyl-L-methionine site; these read RD and ER.

It belongs to the methyltransferase superfamily. RsmJ family.

It is found in the cytoplasm. It carries out the reaction guanosine(1516) in 16S rRNA + S-adenosyl-L-methionine = N(2)-methylguanosine(1516) in 16S rRNA + S-adenosyl-L-homocysteine + H(+). Functionally, specifically methylates the guanosine in position 1516 of 16S rRNA. This chain is Ribosomal RNA small subunit methyltransferase J, found in Cellvibrio japonicus (strain Ueda107) (Pseudomonas fluorescens subsp. cellulosa).